A 359-amino-acid polypeptide reads, in one-letter code: tRNA-specific 2-thiouridylase MnmA (359 aa).

ATP-binding positions include 9–16 (GISGGVDS) and Met-35. The tract at residues 95-97 (NPD) is interaction with target base in tRNA. Cys-100 functions as the Nucleophile in the catalytic mechanism. A disulfide bond links Cys-100 and Cys-197. An ATP-binding site is contributed by Gly-124. Residues 147-149 (KDQ) form an interaction with tRNA region. Catalysis depends on Cys-197, which acts as the Cysteine persulfide intermediate. An interaction with tRNA region spans residues 309–310 (RY).

Belongs to the MnmA/TRMU family.

It localises to the cytoplasm. The catalysed reaction is S-sulfanyl-L-cysteinyl-[protein] + uridine(34) in tRNA + AH2 + ATP = 2-thiouridine(34) in tRNA + L-cysteinyl-[protein] + A + AMP + diphosphate + H(+). In terms of biological role, catalyzes the 2-thiolation of uridine at the wobble position (U34) of tRNA, leading to the formation of s(2)U34. This is tRNA-specific 2-thiouridylase MnmA from Francisella philomiragia subsp. philomiragia (strain ATCC 25017 / CCUG 19701 / FSC 153 / O#319-036).